We begin with the raw amino-acid sequence, 696 residues long: HIPL2 protein (696 aa).

The signal sequence occupies residues 1–24 (MAKTNQAITICSLLLLLLLSETTS). N-linked (GlcNAc...) asparagine glycans are attached at residues asparagine 38, asparagine 69, asparagine 74, asparagine 108, asparagine 124, asparagine 148, asparagine 175, asparagine 339, asparagine 431, asparagine 513, asparagine 519, asparagine 528, asparagine 581, and asparagine 651. Serine 672 carries the GPI-anchor amidated serine lipid modification. Residues 673-696 (SARKLCFSVFLLLSLLMMFLTLLD) constitute a propeptide, removed in mature form.

It belongs to the PQQ oxidoreductase GdhB family. Requires pyrroloquinoline quinone as cofactor.

The protein localises to the cell membrane. This Arabidopsis thaliana (Mouse-ear cress) protein is HIPL2 protein (HIPL2).